A 162-amino-acid chain; its full sequence is Transcription elongation factor GreA (162 aa).

Positions 45–65 (NAEYHAAKERQLFIEARINEL) form a coiled coil.

The protein belongs to the GreA/GreB family.

In terms of biological role, necessary for efficient RNA polymerase transcription elongation past template-encoded arresting sites. The arresting sites in DNA have the property of trapping a certain fraction of elongating RNA polymerases that pass through, resulting in locked ternary complexes. Cleavage of the nascent transcript by cleavage factors such as GreA or GreB allows the resumption of elongation from the new 3'terminus. GreA releases sequences of 2 to 3 nucleotides. This is Transcription elongation factor GreA from Wolinella succinogenes (strain ATCC 29543 / DSM 1740 / CCUG 13145 / JCM 31913 / LMG 7466 / NCTC 11488 / FDC 602W) (Vibrio succinogenes).